The primary structure comprises 544 residues: Methionine--tRNA ligase (544 aa).

A 'HIGH' region motif is present at residues 10–20 (PYANGSLHLGH). Residues C141, C144, C153, and C156 each coordinate Zn(2+). A 'KMSKS' region motif is present at residues 329-333 (KLSTS). T332 contributes to the ATP binding site.

It belongs to the class-I aminoacyl-tRNA synthetase family. MetG type 1 subfamily. In terms of assembly, monomer. Zn(2+) serves as cofactor.

The protein localises to the cytoplasm. It catalyses the reaction tRNA(Met) + L-methionine + ATP = L-methionyl-tRNA(Met) + AMP + diphosphate. In terms of biological role, is required not only for elongation of protein synthesis but also for the initiation of all mRNA translation through initiator tRNA(fMet) aminoacylation. The sequence is that of Methionine--tRNA ligase from Bacillus cereus (strain B4264).